A 601-amino-acid polypeptide reads, in one-letter code: DNA mismatch repair protein MutL (601 aa).

It belongs to the DNA mismatch repair MutL/HexB family.

This protein is involved in the repair of mismatches in DNA. It is required for dam-dependent methyl-directed DNA mismatch repair. May act as a 'molecular matchmaker', a protein that promotes the formation of a stable complex between two or more DNA-binding proteins in an ATP-dependent manner without itself being part of a final effector complex. This is DNA mismatch repair protein MutL from Listeria monocytogenes serovar 1/2a (strain ATCC BAA-679 / EGD-e).